Here is a 36-residue protein sequence, read N- to C-terminus: Mu/omega-theraphotoxin-Pmu1a (36 aa).

3 disulfides stabilise this stretch: Cys2/Cys16, Cys9/Cys21, and Cys15/Cys29.

Belongs to the neurotoxin 10 (Hwtx-1) family. In terms of tissue distribution, expressed by the venom gland.

The protein localises to the secreted. Gating-modifier toxin that targets both voltage-gated sodium and calcium channels, with described activities on human Nav1.7/SCN9A (IC(50)=5.5-7 nM), hNav1.6/SCN10A (IC(50)=9.9 nM), hNav1.4/SCN4A (IC(50)=62.9 nM), hCav3.2/CACNA1H (IC(50)=955.4 nM or 63.5% inhibition at 10 uM), hCav3.1/CACNA1G (95.1% inhibition at 10 uM), hCav3.3/CACNA1I (90.8% inhibition at 10 uM). Acts on Cav3 currents mainly by inducing a strong depolarizing shift in the current-voltage curve. This chain is Mu/omega-theraphotoxin-Pmu1a, found in Pterinochilus murinus (Mombasa golden starburst baboon spider).